Here is a 183-residue protein sequence, read N- to C-terminus: MASELDNLPVITTRREEAQGFLQGLVSKGLGWARKYSLFQYPFVTACCGMEFMTVASARYDLDRFGAALPRFSPRQADLLIVVGTVNCKQAPILRRVYEQIAEPKWVVAFGVCASSGGFYDNYATVQGIDRIVPVDVYIPGCPPRPEQVLDGIMLLQQKIQGQQHKLIDRKPLPVVGQEPISR.

Cys47, Cys48, Cys113, and Cys142 together coordinate [4Fe-4S] cluster.

The protein belongs to the complex I 20 kDa subunit family. As to quaternary structure, NDH-1 is composed of 14 different subunits. Subunits NuoB, C, D, E, F, and G constitute the peripheral sector of the complex. [4Fe-4S] cluster serves as cofactor.

It is found in the cell inner membrane. It carries out the reaction a quinone + NADH + 5 H(+)(in) = a quinol + NAD(+) + 4 H(+)(out). NDH-1 shuttles electrons from NADH, via FMN and iron-sulfur (Fe-S) centers, to quinones in the respiratory chain. The immediate electron acceptor for the enzyme in this species is believed to be ubiquinone. Couples the redox reaction to proton translocation (for every two electrons transferred, four hydrogen ions are translocated across the cytoplasmic membrane), and thus conserves the redox energy in a proton gradient. The polypeptide is NADH-quinone oxidoreductase subunit B 2 (Anaeromyxobacter sp. (strain Fw109-5)).